The sequence spans 88 residues: Large ribosomal subunit protein bL27 (88 aa).

It belongs to the bacterial ribosomal protein bL27 family.

This Parabacteroides distasonis (strain ATCC 8503 / DSM 20701 / CIP 104284 / JCM 5825 / NCTC 11152) protein is Large ribosomal subunit protein bL27.